Reading from the N-terminus, the 75-residue chain is Large ribosomal subunit protein bL31 (75 aa).

Residues cysteine 16, cysteine 18, cysteine 38, and cysteine 41 each coordinate Zn(2+).

This sequence belongs to the bacterial ribosomal protein bL31 family. Type A subfamily. As to quaternary structure, part of the 50S ribosomal subunit. Zn(2+) serves as cofactor.

In terms of biological role, binds the 23S rRNA. The protein is Large ribosomal subunit protein bL31 of Mycolicibacterium smegmatis (strain ATCC 700084 / mc(2)155) (Mycobacterium smegmatis).